The following is an 81-amino-acid chain: Large ribosomal subunit protein eL31 (81 aa).

Belongs to the eukaryotic ribosomal protein eL31 family.

This Methanothermobacter thermautotrophicus (strain ATCC 29096 / DSM 1053 / JCM 10044 / NBRC 100330 / Delta H) (Methanobacterium thermoautotrophicum) protein is Large ribosomal subunit protein eL31 (rpl31e).